A 445-amino-acid chain; its full sequence is Glycine betaine monooxygenase oxygenase subunit (445 aa).

The Rieske domain occupies 73–180 (WLFVGMTCEI…VTHAGGFLFV (108 aa)). 4 residues coordinate [2Fe-2S] cluster: Cys-115, His-117, Cys-135, and His-138. 2 residues coordinate Fe cation: His-234 and His-239.

Belongs to the bacterial ring-hydroxylating dioxygenase alpha subunit family. In terms of assembly, homotrimer. The system is composed of an oxygenase subunit (BmoA) and a reductase subunit (BmoB). Maximal specific activity is obtained when the ratio of BmoA to BmoB is 5:1. [2Fe-2S] cluster serves as cofactor. Requires Fe cation as cofactor.

The enzyme catalyses glycine betaine + NADH + O2 + H(+) = N,N-dimethylglycine + formaldehyde + NAD(+) + H2O. With respect to regulation, activity is absolutely dependent on the presence of BmoB. Glycine betaine monooxygenase activity is significantly enhanced by Fe(2+) and severely inhibited by heavy-metal ions, including Co(2+), Mn(2+), Zn(2+), Cu(2+) and Ag(+). Severely inhibited by EDTA. Its function is as follows. Involved in degradation of glycine betaine. Part of a Rieske-type oxygenase system that catalyzes the conversion of glycine betaine (GB) to dimethylglycine (DMG). This subunit is the terminal oxygenase component of the system. Is specific for GB, and does not show any activity on choline, L-carnitine, stachydrine, dimethylglycine or sarcosine. Activity is strictly dependent on NADH. This is Glycine betaine monooxygenase oxygenase subunit from Chromohalobacter salexigens (strain ATCC BAA-138 / DSM 3043 / CIP 106854 / NCIMB 13768 / 1H11).